The sequence spans 237 residues: Neural retina-specific leucine zipper protein (237 aa).

Residues Lys-20 and Lys-24 each participate in a glycyl lysine isopeptide (Lys-Gly) (interchain with G-Cter in SUMO) cross-link. Positions 23-57 (VKREPSEGRPGPPTASLGSTPYSSVPPSPTFSEPG) are disordered. Positions 30-93 (GRPGPPTASL…AGEALGLSPE (64 aa)) are minimal transactivation domain (MTD). The interval 159–185 (RLKQRRRTLKNRGYAQACRSKRLQQRR) is basic motif. The 64-residue stretch at 159–222 (RLKQRRRTLK…DLYKARCDRL (64 aa)) folds into the bZIP domain. A leucine-zipper region spans residues 187 to 208 (LEAERARLAAQLDALRAEVARL).

Belongs to the bZIP family. As to quaternary structure, interacts with FIZ1; this interaction represses transactivation. Interacts (via the leucine-zipper domain) with CRX. Post-translationally, phosphorylated. In terms of processing, disumoylated at Lys-20. Sumoylation modulates the transcriptional activity of NRL on RHO and NR2E3 promoters, and is required for normal rod differentiation. As to expression, expressed in the brain and the retina. Expressed strongly in rod and cone cells (at protein level).

The protein resides in the cytoplasm. Its subcellular location is the nucleus. Its function is as follows. Acts as a transcriptional activator which regulates the expression of several rod-specific genes, including RHO and PDE6B. Also functions as a transcriptional coactivator, stimulating transcription mediated by the transcription factor CRX and NR2E3. Binds to the rhodopsin promoter in a sequence-specific manner. The polypeptide is Neural retina-specific leucine zipper protein (NRL) (Homo sapiens (Human)).